Reading from the N-terminus, the 91-residue chain is Small ribosomal subunit protein bS18 (91 aa).

The protein belongs to the bacterial ribosomal protein bS18 family. In terms of assembly, part of the 30S ribosomal subunit. Forms a tight heterodimer with protein bS6.

Its function is as follows. Binds as a heterodimer with protein bS6 to the central domain of the 16S rRNA, where it helps stabilize the platform of the 30S subunit. The sequence is that of Small ribosomal subunit protein bS18 from Paraburkholderia phytofirmans (strain DSM 17436 / LMG 22146 / PsJN) (Burkholderia phytofirmans).